We begin with the raw amino-acid sequence, 54 residues long: ComX pheromone (54 aa).

Positions 1 to 46 (MQEIVGYLVKNPEVLDEVMKGRASLLNIDKDQLKSIVDAFGGLQIY) are excised as a propeptide. A lipid anchor (3'-geranyl-2',N2-cyclotryptophan) is attached at Trp-51.

Interacts directly with the sensor histidine kinase ComP and stimulates its activity. Post-translationally, trp-51 is modified by isoprenylation, probably by geranylation, which is essential for activity. Modified by the tryptophan prenyltransferase ComQ before export to the extracellular environment. The type of isoprenyl derivative differs among the different pherotypes and depends on ComX primary sequence.

The protein resides in the secreted. In terms of biological role, part of a major quorum-sensing system that regulates the development of genetic competence. Acts through the activation of the two-component regulatory system ComP/ComA composed of a sensor histidine kinase, ComP, and a response regulator, ComA. In Bacillus mojavensis, this protein is ComX pheromone.